The chain runs to 321 residues: Isopenicillin N synthase (321 aa).

The tract at residues methionine 1–glycine 42 is disordered. Residues arginine 87, tyrosine 91, and tyrosine 188 each contribute to the isopenicillin N site. Arginine 87, tyrosine 91, tyrosine 188, histidine 213, and aspartate 215 together coordinate N-[(5S)-5-amino-5-carboxypentanoyl]-L-cysteinyl-D-valine. One can recognise a Fe2OG dioxygenase domain in the interval threonine 179–alanine 287. Residues histidine 213, aspartate 215, and histidine 269 each coordinate Fe(2+). Residue arginine 278 coordinates 2-oxoglutarate. Isopenicillin N is bound at residue serine 280. Serine 280 provides a ligand contact to N-[(5S)-5-amino-5-carboxypentanoyl]-L-cysteinyl-D-valine.

It belongs to the iron/ascorbate-dependent oxidoreductase family. Fe cation serves as cofactor. Requires L-ascorbate as cofactor.

The catalysed reaction is N-[(5S)-5-amino-5-carboxypentanoyl]-L-cysteinyl-D-valine + O2 = isopenicillin N + 2 H2O. The protein operates within antibiotic biosynthesis; penicillin G biosynthesis; penicillin G from L-alpha-aminoadipate and L-cysteine and L-valine: step 2/3. Functionally, removes, in the presence of oxygen, 4 hydrogen atoms from delta-L-(alpha-aminoadipyl)-L-cysteinyl-D-valine (ACV) to form the azetidinone and thiazolidine rings of isopenicillin. The protein is Isopenicillin N synthase (pcbC) of Streptantibioticus cattleyicolor (Streptomyces cattleya).